The following is a 317-amino-acid chain: L-lactate dehydrogenase (317 aa).

Residues Val-18, Asp-39, Lys-44, Tyr-69, and 83–84 each bind NAD(+); that span reads GA. Substrate-binding positions include Gln-86, Arg-92, and 124–127; that span reads NPVD. Residues 122-124 and Ser-147 contribute to the NAD(+) site; that span reads VTN. Position 152–155 (152–155) interacts with substrate; sequence DTAR. Residues Arg-157 and His-172 each contribute to the beta-D-fructose 1,6-bisphosphate site. The active-site Proton acceptor is the His-179. Tyr-225 carries the post-translational modification Phosphotyrosine. Thr-234 contacts substrate.

This sequence belongs to the LDH/MDH superfamily. LDH family. In terms of assembly, homotetramer.

It localises to the cytoplasm. The enzyme catalyses (S)-lactate + NAD(+) = pyruvate + NADH + H(+). Its pathway is fermentation; pyruvate fermentation to lactate; (S)-lactate from pyruvate: step 1/1. With respect to regulation, allosterically activated by fructose 1,6-bisphosphate (FBP). Catalyzes the conversion of lactate to pyruvate. This is L-lactate dehydrogenase from Acetivibrio thermocellus (strain ATCC 27405 / DSM 1237 / JCM 9322 / NBRC 103400 / NCIMB 10682 / NRRL B-4536 / VPI 7372) (Clostridium thermocellum).